The sequence spans 264 residues: Tritrans,polycis-undecaprenyl-diphosphate synthase (geranylgeranyl-diphosphate specific) (264 aa).

Residue Asp-43 is part of the active site. A Mg(2+)-binding site is contributed by Asp-43. Substrate-binding positions include 44–47 (GNRR), Trp-48, His-60, and 88–90 (STE). The active-site Proton acceptor is the Asn-91. Substrate is bound by residues Phe-92, Arg-94, Arg-213, and 219–221 (RIS). Mg(2+) is bound at residue Glu-232.

Belongs to the UPP synthase family. As to quaternary structure, homodimer. Mg(2+) serves as cofactor.

The enzyme catalyses geranylgeranyl diphosphate + 7 isopentenyl diphosphate = tri-trans,hepta-cis-undecaprenyl diphosphate + 7 diphosphate. In terms of biological role, catalyzes the sequential condensation of isopentenyl diphosphate (IPP) with geranylgeranyl diphosphate (GGPP) to yield (2Z,6Z,10Z,14Z,18Z,22Z,26Z,30E,34E,38E)-undecaprenyl diphosphate (tritrans,heptacis-UPP). It is probably the precursor of glycosyl carrier lipids. The polypeptide is Tritrans,polycis-undecaprenyl-diphosphate synthase (geranylgeranyl-diphosphate specific) (Pyrococcus furiosus (strain ATCC 43587 / DSM 3638 / JCM 8422 / Vc1)).